The following is a 352-amino-acid chain: Inhibin beta C chain (352 aa).

The first 18 residues, 1 to 18 (MASSLLLALLFLTPTTVV), serve as a signal peptide directing secretion. The propeptide occupies 19-236 (NPKTEGPCPA…VEGKHRVRRR (218 aa)). N-linked (GlcNAc...) asparagine glycosylation is found at Asn111, Asn143, Asn161, and Asn173. Cystine bridges form between Cys240–Cys248, Cys247–Cys317, Cys276–Cys349, and Cys280–Cys351.

It belongs to the TGF-beta family. As to quaternary structure, homodimeric or heterodimeric through association with alpha and beta subunits, linked by one or more disulfide bonds. Inhibins are heterodimers of one alpha and one beta subunit. Activins are homo- or heterodimers of beta subunits only. In terms of tissue distribution, mainly expressed in the adult liver.

Its subcellular location is the secreted. Inhibins and activins inhibit and activate, respectively, the secretion of follitropin by the pituitary gland. Inhibins/activins are involved in regulating a number of diverse functions such as hypothalamic and pituitary hormone secretion, gonadal hormone secretion, germ cell development and maturation, erythroid differentiation, insulin secretion, nerve cell survival, embryonic axial development or bone growth, depending on their subunit composition. Inhibins appear to oppose the functions of activins. This Mus musculus (Mouse) protein is Inhibin beta C chain (Inhbc).